Here is a 267-residue protein sequence, read N- to C-terminus: 4-hydroxy-tetrahydrodipicolinate reductase (267 aa).

NAD(+)-binding positions include 8–13 (GAAGRM) and glutamate 34. Arginine 35 is an NADP(+) binding site. NAD(+) is bound by residues 98-100 (GST) and 122-125 (APNM). Histidine 155 functions as the Proton donor/acceptor in the catalytic mechanism. Histidine 156 lines the (S)-2,3,4,5-tetrahydrodipicolinate pocket. Lysine 159 functions as the Proton donor in the catalytic mechanism. 165–166 (GT) is a binding site for (S)-2,3,4,5-tetrahydrodipicolinate.

The protein belongs to the DapB family.

It localises to the cytoplasm. It catalyses the reaction (S)-2,3,4,5-tetrahydrodipicolinate + NAD(+) + H2O = (2S,4S)-4-hydroxy-2,3,4,5-tetrahydrodipicolinate + NADH + H(+). The enzyme catalyses (S)-2,3,4,5-tetrahydrodipicolinate + NADP(+) + H2O = (2S,4S)-4-hydroxy-2,3,4,5-tetrahydrodipicolinate + NADPH + H(+). It participates in amino-acid biosynthesis; L-lysine biosynthesis via DAP pathway; (S)-tetrahydrodipicolinate from L-aspartate: step 4/4. Catalyzes the conversion of 4-hydroxy-tetrahydrodipicolinate (HTPA) to tetrahydrodipicolinate. In Geobacter sp. (strain M21), this protein is 4-hydroxy-tetrahydrodipicolinate reductase.